A 546-amino-acid polypeptide reads, in one-letter code: MTPGEVRRLYFIIRTFLSYGLDELIPRMRLTLPLRLWRYSLFWMPNRHKDKLLGERLRLALQELGPVWIKFGQMLSTRRDLFPPQIADQLALLQDKVAPFDGRLAKAQIEEAMGGLPVDAWFDDFDIQPLASASIAQVHTARLKSNGKEVVIKVIRPDILPVIQADLKLIYRLARWVPRLLPDGRRLRPTEVVREYEKTLIDELNLLRESANAIQLRRNFENSPMLYIPEVYSDYCSQNMMVMERIYGIPVSDVAALEKNGTNMKLLAERGVKVFFTQVFRDSFFHADMHPGNIFVSHEHPENPQYIGIDCGIVGSLNKEDKRYLAENFIAFFNRDYRKVAELHVDSGWVPPDTNVEDFEFAIRTVCEPIFEKPLAEISFGHVLLNLFNTARRFNMEVQPQLVLLQKTLLYVEGVGRQLYPQLDLWKTAKPFLESWIKDQVGIPALTRALKEKAPFWVEKMPEIPELVYDSLRQGKYLQHSVDKIARELQVNHVRQSQSRYLLGIGATLLLSGSFLLVNRPEWGLMPSWLMVGGVVVWLVGWRKTR.

The region spanning 124 to 502 is the Protein kinase domain; it reads DFDIQPLASA…HVRQSQSRYL (379 aa). Residues 130-138 and Lys153 each bind ATP; that span reads LASASIAQV. Asp288 functions as the Proton acceptor in the catalytic mechanism. Transmembrane regions (helical) follow at residues 501–521 and 522–542; these read YLLG…VNRP and EWGL…LVGW.

The protein belongs to the ABC1 family. UbiB subfamily.

The protein localises to the cell inner membrane. It functions in the pathway cofactor biosynthesis; ubiquinone biosynthesis [regulation]. Is probably a protein kinase regulator of UbiI activity which is involved in aerobic coenzyme Q (ubiquinone) biosynthesis. This Salmonella gallinarum (strain 287/91 / NCTC 13346) protein is Probable protein kinase UbiB.